A 605-amino-acid chain; its full sequence is MSNKQLVKPKTETKTEITTEQSQKLLQTMLTMSFGCLAFLRGLFPDDIFVDQRFVPEKVEKNYNKQNTSQNNSIKIKTLIRGKSAQADLLLDWLEKGVFKSIRLKCLKALSLGIFLEDPTDLLENYIFSFDYDEENNVNINVNLSGNKKGSKNADPENETISLLDSRRMVQQLMRRFIIITQSLEPLPQKKFLTMRLMFNDNVDEDYQPELFKDATFDKRATLKVPTNLDNDAIDVGTLNTKHHKVALSVLSAATSSMEKAGNTNFIRVDPFDLILQQQEENKLEESVPTKPQNFVTSQTTNVLGNLLNSSQASIQPTQFVSNNPVTGICSCECGLEVPKAATVLKTCKSCRKTLHGICYGNFLHSSIEKCFTCIFGPSLDTKWSKFQDLMMIRKVFRFLVRKKKGFPASITELIDSFINVEDQNNEVKERVAFALFVFFLDETLCLDNGGKPSQTIRYVTSSVLVDVKGIVIPNTRKQLNVNHEYKWHFTTSSPKAESFYQEVLPNSRKQVESWLQDITNLRKVYSEALSPSSTLQELDLNSSLPTQDPIISGQKRRRYDLDEYLEEDKSSVVNDTIKAKDFDESVPAKIRKISVSKKTLKSNW.

The HORMA domain maps to 20–250 (EQSQKLLQTM…TKHHKVALSV (231 aa)). A zinc finger spans residues 348–364 (CKSCRKTLHGICYGNFL).

Its subcellular location is the nucleus. It localises to the chromosome. Probable constituent of the synaptonemal complex during meiosis. May interact with RED1. This Saccharomyces cerevisiae (strain ATCC 204508 / S288c) (Baker's yeast) protein is Meiosis-specific protein HOP1 (HOP1).